The primary structure comprises 131 residues: Transcription antitermination protein NusB (131 aa).

The protein belongs to the NusB family.

Its function is as follows. Involved in transcription antitermination. Required for transcription of ribosomal RNA (rRNA) genes. Binds specifically to the boxA antiterminator sequence of the ribosomal RNA (rrn) operons. The chain is Transcription antitermination protein NusB from Bacillus pumilus (strain SAFR-032).